The sequence spans 312 residues: Ribosomal RNA small subunit methyltransferase H (312 aa).

S-adenosyl-L-methionine-binding positions include 35–37, Asp-55, Asp-101, and Gln-108; that span reads GGH. The tract at residues 285–306 is disordered; that stretch reads ALKPSEHEVTENSRSRSSVLRV. A compositionally biased stretch (basic and acidic residues) spans 287 to 298; the sequence is KPSEHEVTENSR.

Belongs to the methyltransferase superfamily. RsmH family.

Its subcellular location is the cytoplasm. It carries out the reaction cytidine(1402) in 16S rRNA + S-adenosyl-L-methionine = N(4)-methylcytidine(1402) in 16S rRNA + S-adenosyl-L-homocysteine + H(+). Its function is as follows. Specifically methylates the N4 position of cytidine in position 1402 (C1402) of 16S rRNA. The protein is Ribosomal RNA small subunit methyltransferase H of Aeromonas salmonicida (strain A449).